A 440-amino-acid polypeptide reads, in one-letter code: Chromosome partition protein MukF (440 aa).

A leucine-zipper region spans residues Leu-208–Ile-236.

It belongs to the MukF family. Interacts, and probably forms a ternary complex, with MukE and MukB via its C-terminal region. The complex formation is stimulated by calcium or magnesium. It is required for an interaction between MukE and MukB.

It localises to the cytoplasm. The protein localises to the nucleoid. Its function is as follows. Involved in chromosome condensation, segregation and cell cycle progression. May participate in facilitating chromosome segregation by condensation DNA from both sides of a centrally located replisome during cell division. Not required for mini-F plasmid partitioning. Probably acts via its interaction with MukB and MukE. Overexpression results in anucleate cells. It has a calcium binding activity. In Escherichia coli O127:H6 (strain E2348/69 / EPEC), this protein is Chromosome partition protein MukF.